Here is a 499-residue protein sequence, read N- to C-terminus: Putative DUF21 domain-containing protein At1g03270 (499 aa).

The Extracellular portion of the chain corresponds to 1–32 (MVVLSTLALVRAAYSLNSFVFEAEDIRFGSPW). Residues 29-211 (GSPWWFVVVG…GKGGELTHEE (183 aa)) form the CNNM transmembrane domain. The helical transmembrane segment at 33–53 (WFVVVGVACFLVLFAGIMSGL) threads the bilayer. Residues 54–91 (TLGLMSLGLVELEILQQSGSSAEKKQAAAILPVVKKQH) lie on the Cytoplasmic side of the membrane. The chain crosses the membrane as a helical span at residues 92 to 112 (QLLVTLLLCNAAAMEALPICL). Over 113–114 (DK) the chain is Extracellular. A helical transmembrane segment spans residues 115–135 (IFHPFVAVLLSVTFVLAFGEI). At 136–145 (IPQAICSRYG) the chain is on the cytoplasmic side. The helical transmembrane segment at 146–166 (LAVGANFLWLVRILMIICYPI) threads the bilayer. The Extracellular segment spans residues 167–499 (AYPIGKVLDA…TEPLLAESDR (333 aa)). A glycan (N-linked (GlcNAc...) asparagine) is linked at N181. CBS domains are found at residues 230–291 (MTPI…EAPV), 295–359 (SIRK…SNLT), and 365–431 (HESH…IVDE). 3 N-linked (GlcNAc...) asparagine glycosylation sites follow: N357, N391, and N484.

It localises to the membrane. This is Putative DUF21 domain-containing protein At1g03270 (CBSDUF4) from Arabidopsis thaliana (Mouse-ear cress).